A 151-amino-acid chain; its full sequence is 3-hydroxyacyl-[acyl-carrier-protein] dehydratase FabZ (151 aa).

Histidine 49 is a catalytic residue.

It belongs to the thioester dehydratase family. FabZ subfamily.

Its subcellular location is the cytoplasm. It carries out the reaction a (3R)-hydroxyacyl-[ACP] = a (2E)-enoyl-[ACP] + H2O. Functionally, involved in unsaturated fatty acids biosynthesis. Catalyzes the dehydration of short chain beta-hydroxyacyl-ACPs and long chain saturated and unsaturated beta-hydroxyacyl-ACPs. This is 3-hydroxyacyl-[acyl-carrier-protein] dehydratase FabZ from Bordetella bronchiseptica (strain ATCC BAA-588 / NCTC 13252 / RB50) (Alcaligenes bronchisepticus).